The chain runs to 111 residues: Ig kappa chain V-III region PC 6684 (111 aa).

Positions 1-23 are framework-1; that stretch reads DIVLTQSPASLAVSLGQRATISC. Cysteines 23 and 92 form a disulfide. Residues 24–38 form a complementarity-determining-1 region; sequence RASKSVSTSGYSYMH. A framework-2 region spans residues 39–53; sequence WYQQKPGQPPKLLIY. Residues 54-60 are complementarity-determining-2; that stretch reads LASNLES. Residues 61-92 are framework-3; sequence GVPARFSGSGSGTDFTLNIHPVEEEDAATYYC. The complementarity-determining-3 stretch occupies residues 93-101; that stretch reads QHSRELPRT. The tract at residues 102–111 is framework-4; the sequence is FGGGTKLEIK.

This chain is Ig kappa chain V-III region PC 6684, found in Mus musculus (Mouse).